We begin with the raw amino-acid sequence, 264 residues long: Intermembrane phospholipid transport system ATP-binding protein MlaF (264 aa).

The 237-residue stretch at 6-242 (IEVKNLTFKR…QDLRVVQFLK (237 aa)) folds into the ABC transporter domain. 38–45 (GPSGIGKT) contacts ATP.

The protein belongs to the ABC transporter superfamily. MlaF family. As to quaternary structure, the complex is composed of two ATP-binding proteins (MlaF), two transmembrane proteins (MlaE), two cytoplasmic solute-binding proteins (MlaB) and six periplasmic solute-binding proteins (MlaD).

It localises to the cell inner membrane. Functionally, part of the ABC transporter complex MlaFEDB, which is involved in a phospholipid transport pathway that maintains lipid asymmetry in the outer membrane by retrograde trafficking of phospholipids from the outer membrane to the inner membrane. Responsible for energy coupling to the transport system. The chain is Intermembrane phospholipid transport system ATP-binding protein MlaF from Haemophilus influenzae (strain ATCC 51907 / DSM 11121 / KW20 / Rd).